The primary structure comprises 69 residues: uncharacterized protein (69 aa).

The N-terminal stretch at 1–21 is a signal peptide; sequence MELLIPLSLLGLYLFSGTRDS. N-linked (GlcNAc...) asparagine glycosylation is present at Asn-41.

It localises to the secreted. This is an uncharacterized protein from Dictyostelium discoideum (Social amoeba).